Consider the following 274-residue polypeptide: 2-dehydro-3-deoxyphosphooctonate aldolase (274 aa).

It belongs to the KdsA family.

It localises to the cytoplasm. It catalyses the reaction D-arabinose 5-phosphate + phosphoenolpyruvate + H2O = 3-deoxy-alpha-D-manno-2-octulosonate-8-phosphate + phosphate. Its pathway is carbohydrate biosynthesis; 3-deoxy-D-manno-octulosonate biosynthesis; 3-deoxy-D-manno-octulosonate from D-ribulose 5-phosphate: step 2/3. The protein operates within bacterial outer membrane biogenesis; lipopolysaccharide biosynthesis. The sequence is that of 2-dehydro-3-deoxyphosphooctonate aldolase from Rickettsia peacockii (strain Rustic).